Consider the following 860-residue polypeptide: Leucine--tRNA ligase (860 aa).

Residues 42 to 52 carry the 'HIGH' region motif; the sequence is PYPSGRLHMGH. The 'KMSKS' region signature appears at 619–623; the sequence is KMSKS. An ATP-binding site is contributed by Lys622.

The protein belongs to the class-I aminoacyl-tRNA synthetase family.

The protein localises to the cytoplasm. It carries out the reaction tRNA(Leu) + L-leucine + ATP = L-leucyl-tRNA(Leu) + AMP + diphosphate. The protein is Leucine--tRNA ligase of Escherichia coli O9:H4 (strain HS).